The primary structure comprises 178 residues: UPF0232 protein cgR_0005 (178 aa).

The interval 16 to 55 (AMRRNGSVPDLNKNDAFRRPPAPKGGVEKRKKGRASGLDG) is disordered.

This sequence belongs to the UPF0232 family.

The sequence is that of UPF0232 protein cgR_0005 from Corynebacterium glutamicum (strain R).